A 167-amino-acid chain; its full sequence is Putative lipoprotein YteS (167 aa).

The signal sequence occupies residues 1 to 20; the sequence is MTKRIRTALCVIVSVLFLAS. The N-palmitoyl cysteine moiety is linked to residue Cys21. Cys21 carries S-diacylglycerol cysteine lipidation.

The protein resides in the cell membrane. Functionally, may play a role in the degradation of type I rhamnogalacturonan derived from plant cell walls. The polypeptide is Putative lipoprotein YteS (yteS) (Bacillus subtilis (strain 168)).